The chain runs to 71 residues: Small ribosomal subunit protein bS21 (71 aa).

Residues 39–71 (EKPTQERKRKAAAAVKRQLRRSSRDVTKRQRLY) are disordered. A compositionally biased stretch (basic residues) spans 45 to 59 (RKRKAAAAVKRQLRR). Basic and acidic residues predominate over residues 60–71 (SSRDVTKRQRLY).

This sequence belongs to the bacterial ribosomal protein bS21 family.

This Stenotrophomonas maltophilia (strain K279a) protein is Small ribosomal subunit protein bS21.